The chain runs to 250 residues: F-box only protein 17 (250 aa).

An F-box domain is found at 15 to 62 (HMALAELPPELLLQVLSHVPPRALVTRCRPVCRAWRDLVDGPSVWLLQ). The 152-residue stretch at 99 to 250 (FCLLAPLGRN…GLLQGLSRLH (152 aa)) folds into the FBA domain.

As to quaternary structure, part of a SCF (SKP1-cullin-F-box) protein ligase complex. Interacts with SKP1 and CUL1.

Functionally, substrate-recognition component of the SCF (SKP1-CUL1-F-box protein)-type E3 ubiquitin ligase complex. Able to recognize and bind denatured glycoproteins, which are modified with complex-type oligosaccharides. Also recognizes sulfated glycans. Does not bind high-mannose glycoproteins. The chain is F-box only protein 17 (Fbxo17) from Rattus norvegicus (Rat).